We begin with the raw amino-acid sequence, 495 residues long: Protein painting of fourth (495 aa).

A disordered region spans residues 1-51; it reads MDSKRAALESGDGPDAKRLDTTDDQDKEASGGDGSQVMLAKHVAPYTGHGC. In terms of domain architecture, RRM spans 215 to 289; the sequence is CSLYVGNIPF…RTLTVRYRRL (75 aa). Low complexity predominate over residues 332-342; it reads ISDSDNCSDSS. Disordered regions lie at residues 332–358, 432–451, and 461–495; these read ISDSDNCSDSSGNGKEDGKRKKKINEQ, PVPATKPTTQAQDDSQKKAK, and GPFRRGTSAMKTADEYEKDDRLEELYAQLERDPDP. Residues 345-358 are compositionally biased toward basic and acidic residues; the sequence is GKEDGKRKKKINEQ. The Bipartite nuclear localization signal motif lies at 351-367; sequence RKKKINEQEREIEKLKR. Residues 472–495 are compositionally biased toward basic and acidic residues; that stretch reads TADEYEKDDRLEELYAQLERDPDP.

Interacts with Zeste. Weakly expressed in embryos. Expression increases during larval and pupal stages. In adults, it is predominantly expressed in males, while it is weakly expressed in females.

It is found in the nucleus. Its subcellular location is the chromosome. Probable RNA-binding protein that specifically binds to the fourth chromosome and may bind an RNA that spreads the fourth chromosome. May be a reminiscence of X chromosome dosage compensation of ancestral Drosophila species in which the X and the fourth chromosomes are one single chromosome. The sequence is that of Protein painting of fourth (Pof) from Drosophila melanogaster (Fruit fly).